The sequence spans 378 residues: MEGLNMSLECTPASRSNGTCYGLAVCGYCYDFVETRQVVKEYEQFNLVVIGLMLPLIGCLGLIGNALSAFTYSRREMISSLNVYLFALACSDIVIILTAFFLFFLENMRKRSEWATYYFAVLSPVMFPLGLTAQTMSVFITVASAFDCLVLVAASEKFKSKFCSVNTSILVGNFNDFKNVIVCLKIIVKIFLLGIFYNSPHMYEIYVIDCWSTMYNTASKDVCPTALRSNVDYVRIYYVYMYTIVMAVGPVLLLIVINTAIVISMRRSSSPNSESDIITLVLVVCLFISCNVLPLTVNFLELLFGIINSYLIDLSNLMVVVNSSCNFLIYYTFGSNFRRTLRYYVRAALNRRAPAQNAANNRTPPRVKLCLPPTEVLI.

Helical transmembrane passes span 47–67 (LVVI…GNAL), 85–105 (LFAL…LFFL), 120–140 (AVLS…SVFI), 180–200 (VIVC…YNSP), 243–263 (TIVM…AIVI), 277–297 (IITL…PLTV), and 315–337 (SNLM…GSNF).

The protein belongs to the G-protein coupled receptor 1 family.

It is found in the cell membrane. The chain is Probable G-protein coupled receptor frpr-1 from Caenorhabditis elegans.